The chain runs to 243 residues: 7-carboxy-7-deazaguanine synthase (243 aa).

Residues 15-17 (IQG) and R30 contribute to the substrate site. Positions 21 to 239 (VIGQKTMFVR…PQLHTLLWGN (219 aa)) constitute a Radical SAM core domain. [4Fe-4S] cluster is bound by residues C34, C38, and C41. S43 contributes to the Mg(2+) binding site. S81 is a binding site for substrate. Residues G83 and 127–129 (SPK) contribute to the S-adenosyl-L-methionine site.

It belongs to the radical SAM superfamily. 7-carboxy-7-deazaguanine synthase family. As to quaternary structure, homodimer. The cofactor is [4Fe-4S] cluster. It depends on S-adenosyl-L-methionine as a cofactor. Mg(2+) serves as cofactor.

The enzyme catalyses 6-carboxy-5,6,7,8-tetrahydropterin + H(+) = 7-carboxy-7-deazaguanine + NH4(+). The protein operates within purine metabolism; 7-cyano-7-deazaguanine biosynthesis. In terms of biological role, catalyzes the complex heterocyclic radical-mediated conversion of 6-carboxy-5,6,7,8-tetrahydropterin (CPH4) to 7-carboxy-7-deazaguanine (CDG), a step common to the biosynthetic pathways of all 7-deazapurine-containing compounds. The polypeptide is 7-carboxy-7-deazaguanine synthase (Bacillus subtilis (strain 168)).